A 120-amino-acid polypeptide reads, in one-letter code: Ribonuclease P protein component (120 aa).

Belongs to the RnpA family. In terms of assembly, consists of a catalytic RNA component (M1 or rnpB) and a protein subunit.

It catalyses the reaction Endonucleolytic cleavage of RNA, removing 5'-extranucleotides from tRNA precursor.. Its function is as follows. RNaseP catalyzes the removal of the 5'-leader sequence from pre-tRNA to produce the mature 5'-terminus. It can also cleave other RNA substrates such as 4.5S RNA. The protein component plays an auxiliary but essential role in vivo by binding to the 5'-leader sequence and broadening the substrate specificity of the ribozyme. This chain is Ribonuclease P protein component, found in Mycobacterium leprae (strain Br4923).